A 423-amino-acid chain; its full sequence is Gamma-glutamyl phosphate reductase (423 aa).

The protein belongs to the gamma-glutamyl phosphate reductase family.

It is found in the cytoplasm. The catalysed reaction is L-glutamate 5-semialdehyde + phosphate + NADP(+) = L-glutamyl 5-phosphate + NADPH + H(+). It participates in amino-acid biosynthesis; L-proline biosynthesis; L-glutamate 5-semialdehyde from L-glutamate: step 2/2. Catalyzes the NADPH-dependent reduction of L-glutamate 5-phosphate into L-glutamate 5-semialdehyde and phosphate. The product spontaneously undergoes cyclization to form 1-pyrroline-5-carboxylate. The chain is Gamma-glutamyl phosphate reductase from Burkholderia pseudomallei (strain 1710b).